The following is a 466-amino-acid chain: Chromosomal replication initiator protein DnaA (466 aa).

The domain I, interacts with DnaA modulators stretch occupies residues 1-86 (MSLSLWQQCL…EVGTKPVTQT (86 aa)). The domain II stretch occupies residues 86–129 (TLKTPVHNVVAPTQTTTAQPQRVAPAARSGWDNVPAPAEPTYRS). Positions 130–346 (NVNVKHTFDN…GALNRVIANA (217 aa)) are domain III, AAA+ region. ATP contacts are provided by G174, G176, K177, and T178. The domain IV, binds dsDNA stretch occupies residues 347-466 (NFTGRAITID…FSNLIRTLSS (120 aa)).

This sequence belongs to the DnaA family. Oligomerizes as a right-handed, spiral filament on DNA at oriC.

It is found in the cytoplasm. Plays an essential role in the initiation and regulation of chromosomal replication. ATP-DnaA binds to the origin of replication (oriC) to initiate formation of the DNA replication initiation complex once per cell cycle. Binds the DnaA box (a 9 base pair repeat at the origin) and separates the double-stranded (ds)DNA. Forms a right-handed helical filament on oriC DNA; dsDNA binds to the exterior of the filament while single-stranded (ss)DNA is stabiized in the filament's interior. The ATP-DnaA-oriC complex binds and stabilizes one strand of the AT-rich DNA unwinding element (DUE), permitting loading of DNA polymerase. After initiation quickly degrades to an ADP-DnaA complex that is not apt for DNA replication. Binds acidic phospholipids. This is Chromosomal replication initiator protein DnaA from Salmonella enteritidis PT4 (strain P125109).